The following is a 426-amino-acid chain: Serine--tRNA ligase (426 aa).

T233–E235 serves as a coordination point for L-serine. Residue R264–E266 coordinates ATP. An L-serine-binding site is contributed by E287. Residue E351 to S354 coordinates ATP. Position 387 (S387) interacts with L-serine.

It belongs to the class-II aminoacyl-tRNA synthetase family. Type-1 seryl-tRNA synthetase subfamily. In terms of assembly, homodimer. The tRNA molecule binds across the dimer.

The protein localises to the cytoplasm. The catalysed reaction is tRNA(Ser) + L-serine + ATP = L-seryl-tRNA(Ser) + AMP + diphosphate + H(+). It catalyses the reaction tRNA(Sec) + L-serine + ATP = L-seryl-tRNA(Sec) + AMP + diphosphate + H(+). It participates in aminoacyl-tRNA biosynthesis; selenocysteinyl-tRNA(Sec) biosynthesis; L-seryl-tRNA(Sec) from L-serine and tRNA(Sec): step 1/1. Its function is as follows. Catalyzes the attachment of serine to tRNA(Ser). Is also able to aminoacylate tRNA(Sec) with serine, to form the misacylated tRNA L-seryl-tRNA(Sec), which will be further converted into selenocysteinyl-tRNA(Sec). The sequence is that of Serine--tRNA ligase from Stutzerimonas stutzeri (strain A1501) (Pseudomonas stutzeri).